The following is a 396-amino-acid chain: MAKEKFERTKPHVNVGTIGHVDHGKTTLTAAIATVLSSKFGGEAKKYDEIDAAPEEKARGITINTAHIEYETANRHYAHVDCPGHADYVKNMITGAAQMDGAILVCSAADGPMPQTREHILLARQVGVPYIIVFLNKCDMVDDAELLELVEMEVRELLSKYDFPGDDTPIIKGSAKLALEGDKGELGEVAIMNLADALDSYIPTPERAVDGTFLMPVEDVFSISGRGTVVTGRIERGIIKVGEEIEIVGIKATQKTTCTGVEMFRKLLDQGQAGDNVGILLRGTKREDVERGQVLCKPGSIKPHTHFTGEVYILSKDEGGRHTPFFNNYRPQFYFRTTDVTGSIELPKDKEMVMPGDNVSITVKLIAPIAMEEGLRFAIREGGRTVGAGVVAKIIE.

One can recognise a tr-type G domain in the interval 10 to 206 (KPHVNVGTIG…ALDSYIPTPE (197 aa)). Positions 19 to 26 (GHVDHGKT) are G1. 19 to 26 (GHVDHGKT) contacts GTP. T26 serves as a coordination point for Mg(2+). Residues 60-64 (GITIN) are G2. A G3 region spans residues 81-84 (DCPG). GTP is bound by residues 81-85 (DCPGH) and 136-139 (NKCD). The interval 136–139 (NKCD) is G4. Positions 174 to 176 (SAK) are G5.

The protein belongs to the TRAFAC class translation factor GTPase superfamily. Classic translation factor GTPase family. EF-Tu/EF-1A subfamily. Monomer.

The protein localises to the cytoplasm. The enzyme catalyses GTP + H2O = GDP + phosphate + H(+). Its function is as follows. GTP hydrolase that promotes the GTP-dependent binding of aminoacyl-tRNA to the A-site of ribosomes during protein biosynthesis. In Ralstonia nicotianae (strain ATCC BAA-1114 / GMI1000) (Ralstonia solanacearum), this protein is Elongation factor Tu.